The following is a 229-amino-acid chain: RNA chaperone ProQ (229 aa).

The disordered stretch occupies residues Glu-105–Ser-178. A compositionally biased stretch (basic and acidic residues) spans Gln-117–Arg-136. Basic residues predominate over residues Arg-137 to Pro-146. Over residues Arg-147 to Pro-176 the composition is skewed to basic and acidic residues.

The protein belongs to the ProQ family.

The protein resides in the cytoplasm. Functionally, RNA chaperone with significant RNA binding, RNA strand exchange and RNA duplexing activities. May regulate ProP activity through an RNA-based, post-transcriptional mechanism. This Escherichia fergusonii (strain ATCC 35469 / DSM 13698 / CCUG 18766 / IAM 14443 / JCM 21226 / LMG 7866 / NBRC 102419 / NCTC 12128 / CDC 0568-73) protein is RNA chaperone ProQ.